The chain runs to 291 residues: Ribosomal protein L11 methyltransferase (291 aa).

Residues T136, G159, D181, and N228 each contribute to the S-adenosyl-L-methionine site.

It belongs to the methyltransferase superfamily. PrmA family.

It localises to the cytoplasm. The catalysed reaction is L-lysyl-[protein] + 3 S-adenosyl-L-methionine = N(6),N(6),N(6)-trimethyl-L-lysyl-[protein] + 3 S-adenosyl-L-homocysteine + 3 H(+). Functionally, methylates ribosomal protein L11. The sequence is that of Ribosomal protein L11 methyltransferase from Rhizobium meliloti (strain 1021) (Ensifer meliloti).